Reading from the N-terminus, the 258-residue chain is MSILFYVIFLAYLRGIQGNNMDQRSLPEDSLNSLIIKLIQADILKNKLSKQMVDVKENYQSTLPKAEAPREPEQGEATRSEFQPMIATDTELLRQQRRYNSPRVLLSDSTPLEPPPLYLMEDYVGNPVVTNRTSPRRKRYAEHKSHRGEYSVCDSESLWVTDKSSAIDIRGHQVTVLGEIKTGNSPVKQYFYETRCKEARPVKNGCRGIDDKHWNSQCKTSQTYVRALTSENNKLVGWRWIRIDTSCVCALSRKIGRT.

Residues 1-18 form the signal peptide; the sequence is MSILFYVIFLAYLRGIQG. Positions 19 to 139 are excised as a propeptide; that stretch reads NNMDQRSLPE…TNRTSPRRKR (121 aa). The interval 60-85 is disordered; it reads QSTLPKAEAPREPEQGEATRSEFQPM. The segment covering 67 to 79 has biased composition (basic and acidic residues); it reads EAPREPEQGEATR. Residue Asn131 is glycosylated (N-linked (GlcNAc...) asparagine). Cystine bridges form between Cys153-Cys218, Cys196-Cys247, and Cys206-Cys249.

The protein belongs to the NGF-beta family. As to expression, brain and peripheral tissues.

It is found in the secreted. Functionally, seems to promote the survival of visceral and proprioceptive sensory neurons. This is Neurotrophin-3 (Ntf3) from Rattus norvegicus (Rat).